The following is a 329-amino-acid chain: Ribosomal RNA small subunit methyltransferase H (329 aa).

Residues 34–36 (GGY), aspartate 52, phenylalanine 79, aspartate 100, and glutamine 107 contribute to the S-adenosyl-L-methionine site. A disordered region spans residues 285–329 (GEDEVAHNPRARSAKLRAAERTSAPAHKDDQSSSWPRLSDVMRGG).

Belongs to the methyltransferase superfamily. RsmH family.

The protein resides in the cytoplasm. The catalysed reaction is cytidine(1402) in 16S rRNA + S-adenosyl-L-methionine = N(4)-methylcytidine(1402) in 16S rRNA + S-adenosyl-L-homocysteine + H(+). Functionally, specifically methylates the N4 position of cytidine in position 1402 (C1402) of 16S rRNA. In Bradyrhizobium diazoefficiens (strain JCM 10833 / BCRC 13528 / IAM 13628 / NBRC 14792 / USDA 110), this protein is Ribosomal RNA small subunit methyltransferase H.